A 302-amino-acid chain; its full sequence is Sulfate adenylyltransferase subunit 2 (302 aa).

The protein belongs to the PAPS reductase family. CysD subfamily. As to quaternary structure, heterodimer composed of CysD, the smaller subunit, and CysN.

The catalysed reaction is sulfate + ATP + H(+) = adenosine 5'-phosphosulfate + diphosphate. It functions in the pathway sulfur metabolism; hydrogen sulfide biosynthesis; sulfite from sulfate: step 1/3. With CysN forms the ATP sulfurylase (ATPS) that catalyzes the adenylation of sulfate producing adenosine 5'-phosphosulfate (APS) and diphosphate, the first enzymatic step in sulfur assimilation pathway. APS synthesis involves the formation of a high-energy phosphoric-sulfuric acid anhydride bond driven by GTP hydrolysis by CysN coupled to ATP hydrolysis by CysD. This chain is Sulfate adenylyltransferase subunit 2, found in Xanthomonas axonopodis pv. citri (strain 306).